We begin with the raw amino-acid sequence, 336 residues long: MMLLLPLIIVLMMKLSDARTHSLRYFRLGISEPGYGIPEFISAGYVDSHPITMYNSVSQLKEPRALWMEENLAPDHWERYTQLLRGWQQAFKVELKQLQHHYNHSGFHTYQRMIGCELLEDGSITGFLQYAYDGQDFLIFNKDTLSWMAMDNVADIIRRVWEANRHELQYQKNWLEEECIAWLKRFLEYGKDALQRTEPPKVRVNHKETFPGITTLYCRAYGFYPPEISINWMKNGEEIFQDTDYGGILPSGDGTYQTWVSVELDPQNGDIYSCHVEHGGVHMVLQGFQESETILLVVKAVGFIVLAIALAGVGILAWRKRPRGKNKVICLSTPEH.

The N-terminal stretch at 1 to 18 (MMLLLPLIIVLMMKLSDA) is a signal peptide. Residues 19-105 (RTHSLRYFRL…KQLQHHYNHS (87 aa)) form an alpha-1 region. The interval 19 to 197 (RTHSLRYFRL…EYGKDALQRT (179 aa)) is antigen-binding cleft. Topologically, residues 19–298 (RTHSLRYFRL…QESETILLVV (280 aa)) are extracellular. Positions 25 and 27 each coordinate 8-(9H-purin-6-yl)-2-oxa-8-azabicyclo[3.3.1]nona-3,6-diene-4,6-dicarbaldehyde. Residues arginine 27, serine 42, and lysine 61 each coordinate 5-(2-oxoethylideneamino)-6-(D-ribitylamino)uracil. Residues arginine 27, serine 42, and lysine 61 each contribute to the 5-(2-oxopropylideneamino)-6-(D-ribitylamino)uracil site. 7-hydroxy-6-methyl-8-(1-D-ribityl)lumazine contacts are provided by arginine 27, serine 42, and lysine 61. 2 residues coordinate 8-(9H-purin-6-yl)-2-oxa-8-azabicyclo[3.3.1]nona-3,6-diene-4,6-dicarbaldehyde: lysine 61 and histidine 76. A 2-amino-4-oxopteridine-6-carbaldehyde-binding site is contributed by lysine 61. Residue lysine 61 participates in pyridoxal binding. Asparagine 103 carries an N-linked (GlcNAc...) asparagine glycan. The alpha-2 stretch occupies residues 106 to 197 (GFHTYQRMIG…EYGKDALQRT (92 aa)). Arginine 112 lines the 8-(9H-purin-6-yl)-2-oxa-8-azabicyclo[3.3.1]nona-3,6-diene-4,6-dicarbaldehyde pocket. The 5-(2-oxoethylideneamino)-6-(D-ribitylamino)uracil site is built by arginine 112, tyrosine 170, and glutamine 171. Residues arginine 112, tyrosine 170, and glutamine 171 each contribute to the 5-(2-oxopropylideneamino)-6-(D-ribitylamino)uracil site. 3 residues coordinate 7-hydroxy-6-methyl-8-(1-D-ribityl)lumazine: arginine 112, tyrosine 170, and glutamine 171. Disulfide bonds link cysteine 116-cysteine 179 and cysteine 218-cysteine 274. An alpha-3 region spans residues 198–289 (EPPKVRVNHK…GVHMVLQGFQ (92 aa)). Residues 200–295 (PKVRVNHKET…QGFQESETIL (96 aa)) enclose the Ig-like C1-type domain. The interval 290–298 (ESETILLVV) is connecting peptide. Residues 299–319 (KAVGFIVLAIALAGVGILAWR) form a helical membrane-spanning segment. The Cytoplasmic portion of the chain corresponds to 320–336 (KRPRGKNKVICLSTPEH).

The protein belongs to the MHC class I family. Heterotrimer that consists of MR1, B2M and metabolite antigen. Major classes of metabolite ligands presented by MR1 include riboflavin-related antigens, pyrimidines and ribityl lumazines, nucleobase adducts and folate derivatives. Forms reversible covalent Schiff base complexes with microbial pyrimidine-based metabolite, which serves as a molecular switch triggering complete folding, stable association with B2M and translocation of the ternary complex from endoplasmic reticulum to the plasma membrane. Alternatively, forms non-Schiff base complexes with ribityl lumazines. On antigen-presenting cells, the ternary complex interacts with TCR on MR1-restricted T cells. Interacts with TAPBP and TAPBPL chaperones in the endoplasmic reticulum. TAPBP associated or not with MHC class I peptide loading complex binds ligand-free MR1 or MR1-B2M complex, providing for stable MR1 pools ready for metabolite antigen processing. TAPBPL interacts with MR1 in a ligand-independent way; this interaction may stabilize MR1 pool and facilitate ligand loading and dissociation. Structurally, MR1-B2M heterodimer adopts a topology similar to classical MHC class I molecules, with alpha-1 and alpha-2 domains of MR1 forming the antigen-binding cleft composed of two alpha-helices resting on a floor of 7-stranded anti-parallel beta-pleated sheet. MR1-B2M heterodimer (via alpha-helices) interacts with TCR (via CDR domains). Post-translationally, N-glycosylated.

The protein resides in the cell membrane. The protein localises to the endoplasmic reticulum membrane. It is found in the golgi apparatus membrane. It localises to the early endosome membrane. Its subcellular location is the late endosome membrane. Its function is as follows. Antigen-presenting molecule specialized in displaying microbial pyrimidine-based metabolites to alpha-beta T cell receptors (TCR) on innate-type mucosal-associated invariant T (MAIT) cells. In complex with B2M preferentially presents riboflavin-derived metabolites to semi-invariant TCRs on MAIT cells, guiding immune surveillance of the microbial metabolome at mucosal epithelial barriers. Signature pyrimidine-based microbial antigens are generated via non-enzymatic condensation of metabolite intermediates of the riboflavin pathway with by-products arising from other metabolic pathways such as glycolysis. Typical potent antigenic metabolites are 5-(2-oxoethylideneamino)-6-D-ribitylaminouracil (5-OE-RU) and 5-(2-oxopropylideneamino)-6-D-ribitylaminouracil (5-OP-RU), products of condensation of 5-amino-6-D-ribityaminouracil (5-A-RU) with glyoxal or methylglyoxal by-products, respectively. May present microbial antigens to various MAIT cell subsets, providing for unique recognition of diverse microbes, including pathogens that do not synthesize riboflavin. Upon antigen recognition, elicits rapid innate-type MAIT cell activation to eliminate pathogenic microbes by directly killing infected cells. During T cell development, drives thymic selection and post-thymic terminal differentiation of MAIT cells in a process dependent on commensal microflora. Acts as an immune sensor of cancer cell metabolome. May present a tumor-specific or -associated metabolite essential for cancer cell survival to a pan-cancer TCR on a non-MAIT CD8-positive T cell clone, triggering T cell-mediated killing of a wide range of cancer cell types. May present tumor-enriched pyridoxal and pyridoxal 5'-phosphate antigens, enabling preferential recognition of cancer cells. Presents nucleobase carbonyl adducts generated during oxidative stress. Captures M3Ade, a nucleobase adduct composed of one adenine modified by a malondialdehyde trimer, for recognition by MR1-restricted T cell clones expressing a polyclonal TCR repertoire. This chain is Major histocompatibility complex class I-related protein 1, found in Bos taurus (Bovine).